The sequence spans 346 residues: Phosphoribosylformylglycinamidine cyclo-ligase (346 aa).

The protein belongs to the AIR synthase family.

The protein resides in the cytoplasm. It catalyses the reaction 2-formamido-N(1)-(5-O-phospho-beta-D-ribosyl)acetamidine + ATP = 5-amino-1-(5-phospho-beta-D-ribosyl)imidazole + ADP + phosphate + H(+). Its pathway is purine metabolism; IMP biosynthesis via de novo pathway; 5-amino-1-(5-phospho-D-ribosyl)imidazole from N(2)-formyl-N(1)-(5-phospho-D-ribosyl)glycinamide: step 2/2. The polypeptide is Phosphoribosylformylglycinamidine cyclo-ligase (Bacillus mycoides (strain KBAB4) (Bacillus weihenstephanensis)).